Consider the following 91-residue polypeptide: Succinate dehydrogenase assembly factor 1A, mitochondrial (91 aa).

It belongs to the complex I LYR family. SDHAF1 subfamily. In terms of assembly, interacts with the iron-sulfur protein subunit within the SDH catalytic dimer.

The protein resides in the mitochondrion matrix. Functionally, plays an essential role in the assembly of succinate dehydrogenase (SDH), an enzyme complex (also referred to as respiratory complex II) that is a component of both the tricarboxylic acid (TCA) cycle and the mitochondrial electron transport chain, and which couples the oxidation of succinate to fumarate with the reduction of ubiquinone (coenzyme Q) to ubiquinol. Promotes maturation of the iron-sulfur protein subunit of the SDH catalytic dimer, protecting it from the deleterious effects of oxidants. May act together with SDHAF3. The protein is Succinate dehydrogenase assembly factor 1A, mitochondrial of Dictyostelium discoideum (Social amoeba).